The chain runs to 151 residues: UPF0102 protein Ava_4800 (151 aa).

The protein belongs to the UPF0102 family.

This chain is UPF0102 protein Ava_4800, found in Trichormus variabilis (strain ATCC 29413 / PCC 7937) (Anabaena variabilis).